The primary structure comprises 740 residues: MIFKSLKIFPFYQIYGFRFLKGMIFKKKIHLSKLNKNHDLIHIHSLTLKSIVGKNSWAQRLLQPVVLTLSMGINASLSGNMDDLSYSIDYATVYKEVFKLVENSKFENLLDLSDKISKVVLGDKCKGNWVKVIAETPKGHLLAETGLQIIRRKDGIREIDDQFFIKNLSLYTIIGINPEERVNKQNIIIDLILFKSSINLECKDDFIINTYNIEKLLKEIVKHVEESTFKTIEALALSIARISCISHNIEKIIVKVKKSCALAFAESAGVEIVRSRSCFSSNNYIKSENSIDNEAVYISLGSNLGNRIKFILDAIEKMSIKGIKVLKTSMLYESKPMYFKDQPAFYNAVCKVQTSLHPEQLLFELQLIEKELGRVKVIDKGPRCIDLDIVFYGRKIINSESLIIPHPRVLERSFVLKPLLDISGDLVHPVTGLSIASYFEKIVDHDIKPVLPFLYKNKSIDFSFRSYKAPTYIMAILNLTPDSFFDGGIHSYDSVLIDVEKFINAGATIIDIGGQSTRPGSYIIPLEEEIFRVIPAIKYLQKTYPDILISIDTFRSEVAEQAVKAGASLVNDISGGRYDPKMFNTVARLKVPICIMHMRGNFLNMDNLTDYGTDIIEQITIELEKLLNSAEKSGIPRWNIILDPGLGFSKTLHQNIELLRRFNELKSKNCFNGLPWLLGPSRKRFTGFITGDNMPKDRIWGTVAAVVASISGGCDIIRVHDVYEMYKISKMSDAIWKEIY.

2 DHNA regions span residues 39–160 (DLIH…REID) and 161–280 (DQFF…SCFS). An HPPK region spans residues 291-449 (IDNEAVYISL…EKIVDHDIKP (159 aa)). A Pterin-binding domain is found at 471–730 (TYIMAILNLT…DVYEMYKISK (260 aa)). The segment at 473–740 (IMAILNLTPD…MSDAIWKEIY (268 aa)) is DHPS. Asparagine 478 contributes to the Mg(2+) binding site. Residues threonine 517, aspartate 552, asparagine 571, aspartate 643, lysine 683, and 718 to 720 (RVH) contribute to the (7,8-dihydropterin-6-yl)methyl diphosphate site.

The protein in the N-terminal section; belongs to the DHNA family. In the central section; belongs to the HPPK family. It in the C-terminal section; belongs to the DHPS family. The cofactor is Mg(2+).

The catalysed reaction is 7,8-dihydroneopterin = 6-hydroxymethyl-7,8-dihydropterin + glycolaldehyde. It catalyses the reaction 6-hydroxymethyl-7,8-dihydropterin + ATP = (7,8-dihydropterin-6-yl)methyl diphosphate + AMP + H(+). The enzyme catalyses (7,8-dihydropterin-6-yl)methyl diphosphate + 4-aminobenzoate = 7,8-dihydropteroate + diphosphate. Its pathway is cofactor biosynthesis; tetrahydrofolate biosynthesis; 2-amino-4-hydroxy-6-hydroxymethyl-7,8-dihydropteridine diphosphate from 7,8-dihydroneopterin triphosphate: step 3/4. The protein operates within cofactor biosynthesis; tetrahydrofolate biosynthesis; 2-amino-4-hydroxy-6-hydroxymethyl-7,8-dihydropteridine diphosphate from 7,8-dihydroneopterin triphosphate: step 4/4. It participates in cofactor biosynthesis; tetrahydrofolate biosynthesis; 7,8-dihydrofolate from 2-amino-4-hydroxy-6-hydroxymethyl-7,8-dihydropteridine diphosphate and 4-aminobenzoate: step 1/2. Functionally, catalyzes three sequential steps of tetrahydrofolate biosynthesis. The protein is Folic acid synthesis protein fol1 (fol1) of Pneumocystis carinii.